A 290-amino-acid polypeptide reads, in one-letter code: Probable prolyl 4-hydroxylase 8 (290 aa).

The Cytoplasmic portion of the chain corresponds to methionine 1–glutamine 19. The helical; Signal-anchor for type II membrane protein transmembrane segment at threonine 20–phenylalanine 40 threads the bilayer. The Lumenal segment spans residues serine 41 to asparagine 290. N-linked (GlcNAc...) asparagine glycosylation is present at asparagine 46. One can recognise a Fe2OG dioxygenase domain in the interval asparagine 163–valine 286. Positions 181 and 183 each coordinate Fe cation. Asparagine 222 carries an N-linked (GlcNAc...) asparagine glycan. Histidine 267 is a binding site for Fe cation. Lysine 277 is a 2-oxoglutarate binding site.

It belongs to the P4HA family. It depends on Fe(2+) as a cofactor. L-ascorbate serves as cofactor.

It is found in the endoplasmic reticulum membrane. The enzyme catalyses L-prolyl-[collagen] + 2-oxoglutarate + O2 = trans-4-hydroxy-L-prolyl-[collagen] + succinate + CO2. Its function is as follows. Catalyzes the post-translational formation of 4-hydroxyproline in -Xaa-Pro-Gly- sequences in proline-rich peptide sequences of plant glycoproteins and other proteins. Hydroxyprolines are important constituent of many plant cell wall glycoproteins such as extensins, hydroxyproline-rich glycoproteins, lectins and arabinogalactan proteins. This is Probable prolyl 4-hydroxylase 8 from Arabidopsis thaliana (Mouse-ear cress).